The primary structure comprises 329 residues: Probable quinone oxidoreductase (329 aa).

Ser-191 is modified (phosphoserine).

This sequence belongs to the zinc-containing alcohol dehydrogenase family. Quinone oxidoreductase subfamily.

It localises to the cytoplasm. The protein localises to the nucleus. It carries out the reaction 2 a quinone + NADPH + H(+) = 2 a 1,4-benzosemiquinone + NADP(+). The protein is Probable quinone oxidoreductase (zta1) of Schizosaccharomyces pombe (strain 972 / ATCC 24843) (Fission yeast).